The primary structure comprises 209 residues: Putative NAD(P)H nitroreductase YdgI (209 aa).

FMN-binding positions include 14 to 16 (RRS), 72 to 74 (QTQ), 161 to 162 (GG), and arginine 199.

This sequence belongs to the nitroreductase family. FMN serves as cofactor.

This is Putative NAD(P)H nitroreductase YdgI (ydgI) from Bacillus subtilis (strain 168).